Consider the following 169-residue polypeptide: Neurotensin/neuromedin N (169 aa).

The N-terminal stretch at 1-22 (MIGMNLQLVCLTLLAFSSWSLC) is a signal peptide.

Belongs to the neurotensin family. In terms of assembly, interacts with NTSR1. Interacts with SORT1. Interacts with SORL1. Post-translationally, neurotensin is cleaved and degraded by Angiotensin-converting enzyme (ACE) and neprilysin (MME).

The protein resides in the secreted. It is found in the cytoplasmic vesicle. The protein localises to the secretory vesicle. Neurotensin may play an endocrine or paracrine role in the regulation of fat metabolism. It causes contraction of smooth muscle. The sequence is that of Neurotensin/neuromedin N (Nts) from Rattus norvegicus (Rat).